The sequence spans 141 residues: Acetyltransferase YpeA (141 aa).

An N-acetyltransferase domain is found at 1–141 (MEIRVFRQED…GKRLIEDEEY (141 aa)).

Belongs to the acetyltransferase family. YpeA subfamily.

This Shigella boydii serotype 4 (strain Sb227) protein is Acetyltransferase YpeA.